A 234-amino-acid polypeptide reads, in one-letter code: FAS1 domain-containing protein AFUA_8G05360 (234 aa).

The N-terminal stretch at 1–21 is a signal peptide; it reads MRRTLFVLFVVAFCFIGSVIA. In terms of domain architecture, FAS1 spans 83–231; the sequence is KPVVSDVLPK…GELWILNSVL (149 aa).

The protein localises to the vacuole. This Aspergillus fumigatus (strain ATCC MYA-4609 / CBS 101355 / FGSC A1100 / Af293) (Neosartorya fumigata) protein is FAS1 domain-containing protein AFUA_8G05360.